The following is a 101-amino-acid chain: Small ubiquitin-related modifier 1 (101 aa).

A Ubiquitin-like domain is found at 20–97 (EYIKLKVIGQ…IEVYQEQTGG (78 aa)). G97 is covalently cross-linked (Glycyl lysine isopeptide (Gly-Lys) (interchain with K-? in acceptor proteins)). Positions 98-101 (HSTV) are excised as a propeptide.

It belongs to the ubiquitin family. SUMO subfamily. Interacts with SAE2, UBE2I, RANBP2, PIAS1 and PIAS2. Covalently attached to a number of proteins. Post-translationally, cleavage of precursor form by a sentrin-specific protease is necessary for function.

The protein resides in the nucleus membrane. It is found in the nucleus speckle. The protein localises to the cytoplasm. Its subcellular location is the nucleus. It localises to the PML body. The protein resides in the cell membrane. In terms of biological role, ubiquitin-like protein that can be covalently attached to proteins as a monomer or a lysine-linked polymer. Covalent attachment via an isopeptide bond to its substrates requires prior activation by the E1 complex SAE1-SAE2 and linkage to the E2 enzyme UBE2I. This post-translational modification on lysine residues of proteins plays a crucial role in a number of cellular processes such as nuclear transport, DNA replication and repair, mitosis and signal transduction. Polymeric SUMO1 chains are also susceptible to polyubiquitination which functions as a signal for proteasomal degradation of modified proteins. This is Small ubiquitin-related modifier 1 (SUMO1) from Gallus gallus (Chicken).